The sequence spans 207 residues: Fibroblast growth factor 18 (207 aa).

Positions 1–27 are cleaved as a signal peptide; the sequence is MYSAPSACTCLCLHFLLLCFQVQVLAA. Residue asparagine 39 is glycosylated (N-linked (GlcNAc...) asparagine). Cysteine 109 and cysteine 127 are oxidised to a cystine. An N-linked (GlcNAc...) asparagine glycan is attached at asparagine 137. The tract at residues 157-183 is disordered; it reads GRPRKGPKTRENQQDVHFMKRYPKGQT. Over residues 164–174 the composition is skewed to basic and acidic residues; it reads KTRENQQDVHF.

Belongs to the heparin-binding growth factors family. In terms of assembly, interacts with FGFR3 and FGFR4. As to expression, mainly expressed in the lung. Not detected in brain, heart, liver, kidney and small intestine.

The protein localises to the secreted. Its function is as follows. Plays an important role in the regulation of cell proliferation, cell differentiation and cell migration. Required for normal ossification and bone development. Stimulates hepatic and intestinal proliferation. This Rattus norvegicus (Rat) protein is Fibroblast growth factor 18 (Fgf18).